A 129-amino-acid polypeptide reads, in one-letter code: 3-aminoacrylate deaminase RutC (129 aa).

Belongs to the RutC family.

The catalysed reaction is (Z)-3-aminoacrylate + H2O + H(+) = 3-oxopropanoate + NH4(+). In terms of biological role, involved in pyrimidine catabolism. Catalyzes the deamination of 3-aminoacrylate to malonic semialdehyde, a reaction that can also occur spontaneously. RutC may facilitate the reaction and modulate the metabolic fitness, rather than catalyzing essential functions. This Caulobacter segnis (strain ATCC 21756 / DSM 7131 / JCM 7823 / NBRC 15250 / LMG 17158 / TK0059) (Mycoplana segnis) protein is 3-aminoacrylate deaminase RutC.